Consider the following 274-residue polypeptide: Acetyl-coenzyme A carboxylase carboxyl transferase subunit beta (274 aa).

The 259-residue stretch at 16–274 (LWTKCEECKN…LLNLLFYKNA (259 aa)) folds into the CoA carboxyltransferase N-terminal domain. Zn(2+) is bound by residues cysteine 20, cysteine 23, cysteine 39, and cysteine 42. A C4-type zinc finger spans residues 20-42 (CEECKNILLAQELETNFYVCPKC).

This sequence belongs to the AccD/PCCB family. In terms of assembly, acetyl-CoA carboxylase is a heterohexamer composed of biotin carboxyl carrier protein (AccB), biotin carboxylase (AccC) and two subunits each of ACCase subunit alpha (AccA) and ACCase subunit beta (AccD). It depends on Zn(2+) as a cofactor.

It localises to the cytoplasm. It carries out the reaction N(6)-carboxybiotinyl-L-lysyl-[protein] + acetyl-CoA = N(6)-biotinyl-L-lysyl-[protein] + malonyl-CoA. The protein operates within lipid metabolism; malonyl-CoA biosynthesis; malonyl-CoA from acetyl-CoA: step 1/1. Component of the acetyl coenzyme A carboxylase (ACC) complex. Biotin carboxylase (BC) catalyzes the carboxylation of biotin on its carrier protein (BCCP) and then the CO(2) group is transferred by the transcarboxylase to acetyl-CoA to form malonyl-CoA. This chain is Acetyl-coenzyme A carboxylase carboxyl transferase subunit beta, found in Hydrogenobaculum sp. (strain Y04AAS1).